The following is a 344-amino-acid chain: Arginine N-succinyltransferase (344 aa).

Leu125 lines the succinyl-CoA pocket. His229 (proton donor) is an active-site residue.

Belongs to the arginine N-succinyltransferase family.

It carries out the reaction succinyl-CoA + L-arginine = N(2)-succinyl-L-arginine + CoA + H(+). It participates in amino-acid degradation; L-arginine degradation via AST pathway; L-glutamate and succinate from L-arginine: step 1/5. Functionally, catalyzes the transfer of succinyl-CoA to arginine to produce N(2)-succinylarginine. The protein is Arginine N-succinyltransferase of Shigella flexneri serotype 5b (strain 8401).